The sequence spans 370 residues: UDP-N-acetylglucosamine--N-acetylmuramyl-(pentapeptide) pyrophosphoryl-undecaprenol N-acetylglucosamine transferase (370 aa).

UDP-N-acetyl-alpha-D-glucosamine contacts are provided by residues 15-17 (TGG), Asn-126, Arg-169, Ser-197, and Gln-299.

This sequence belongs to the glycosyltransferase 28 family. MurG subfamily.

The protein resides in the cell inner membrane. The enzyme catalyses di-trans,octa-cis-undecaprenyl diphospho-N-acetyl-alpha-D-muramoyl-L-alanyl-D-glutamyl-meso-2,6-diaminopimeloyl-D-alanyl-D-alanine + UDP-N-acetyl-alpha-D-glucosamine = di-trans,octa-cis-undecaprenyl diphospho-[N-acetyl-alpha-D-glucosaminyl-(1-&gt;4)]-N-acetyl-alpha-D-muramoyl-L-alanyl-D-glutamyl-meso-2,6-diaminopimeloyl-D-alanyl-D-alanine + UDP + H(+). The protein operates within cell wall biogenesis; peptidoglycan biosynthesis. Its function is as follows. Cell wall formation. Catalyzes the transfer of a GlcNAc subunit on undecaprenyl-pyrophosphoryl-MurNAc-pentapeptide (lipid intermediate I) to form undecaprenyl-pyrophosphoryl-MurNAc-(pentapeptide)GlcNAc (lipid intermediate II). This Methylorubrum populi (strain ATCC BAA-705 / NCIMB 13946 / BJ001) (Methylobacterium populi) protein is UDP-N-acetylglucosamine--N-acetylmuramyl-(pentapeptide) pyrophosphoryl-undecaprenol N-acetylglucosamine transferase.